The primary structure comprises 504 residues: Glycerol kinase (504 aa).

Thr-14 provides a ligand contact to ADP. ATP contacts are provided by Thr-14, Thr-15, and Ser-16. Thr-14 is a sn-glycerol 3-phosphate binding site. Arg-18 is a binding site for ADP. The sn-glycerol 3-phosphate site is built by Arg-84, Glu-85, Tyr-136, and Asp-246. Glycerol contacts are provided by Arg-84, Glu-85, Tyr-136, Asp-246, and Gln-247. The ADP site is built by Thr-268 and Gly-311. ATP-binding residues include Thr-268, Gly-311, Gln-315, and Gly-412. ADP-binding residues include Gly-412 and Asn-416.

This sequence belongs to the FGGY kinase family.

The catalysed reaction is glycerol + ATP = sn-glycerol 3-phosphate + ADP + H(+). The protein operates within polyol metabolism; glycerol degradation via glycerol kinase pathway; sn-glycerol 3-phosphate from glycerol: step 1/1. Its activity is regulated as follows. Inhibited by fructose 1,6-bisphosphate (FBP). Functionally, key enzyme in the regulation of glycerol uptake and metabolism. Catalyzes the phosphorylation of glycerol to yield sn-glycerol 3-phosphate. In Aliivibrio fischeri (strain MJ11) (Vibrio fischeri), this protein is Glycerol kinase.